Consider the following 188-residue polypeptide: Putative 3-methyladenine DNA glycosylase (188 aa).

The protein belongs to the DNA glycosylase MPG family.

The protein is Putative 3-methyladenine DNA glycosylase of Ehrlichia ruminantium (Cowdria ruminantium).